Consider the following 438-residue polypeptide: EF-hand calcium-binding domain-containing protein 3 (438 aa).

EF-hand domains are found at residues Ser-47–Asn-82 and Leu-83–Phe-118. Ca(2+) contacts are provided by Asp-96, Asp-98, Asp-100, Lys-102, and Asp-107. Tyr-279 carries the post-translational modification Phosphotyrosine. A disordered region spans residues Ser-413 to Gln-438. A compositionally biased stretch (basic residues) spans Arg-426 to Gln-438.

In Bos taurus (Bovine), this protein is EF-hand calcium-binding domain-containing protein 3 (EFCAB3).